The following is a 212-amino-acid chain: Cyclin-P4-1 (212 aa).

Belongs to the cyclin family. Cyclin U/P subfamily.

This chain is Cyclin-P4-1 (CYCP4-1), found in Oryza sativa subsp. japonica (Rice).